We begin with the raw amino-acid sequence, 347 residues long: Cannabinoid receptor 2 (347 aa).

The Extracellular portion of the chain corresponds to 1–33 (MEGCRETEVTNGSNGGLEFNPMKEYMILSSGQQ). N-linked (GlcNAc...) asparagine glycosylation occurs at N11. The helical transmembrane segment at 34-59 (IAVAVLCTLMGLLSALENMAVLYIIL) threads the bilayer. The Cytoplasmic segment spans residues 60-71 (SSRRLRRKPSYL). A helical membrane pass occupies residues 72-92 (FISSLAGADFLASVIFACNFV). Over 93 to 104 (IFHVFHGVDSNA) the chain is Extracellular. The helical transmembrane segment at 105–129 (IFLLKIGSVTMTFTASVGSLLLTAV) threads the bilayer. At 130-149 (DRYLCLCYPPTYKALVTRGR) the chain is on the cytoplasmic side. Residues 150-172 (ALVALCVMWVLSALISYLPLMGW) traverse the membrane as a helical segment. Over 173-188 (TCCPSPCSELFPLIPN) the chain is Extracellular. A helical membrane pass occupies residues 189–214 (DYLLGWLLFIAILFSGIIYTYGYVLW). Over 215–246 (KAHRHVATLAEHQDRQVPGIARMRLDVRLAKT) the chain is Cytoplasmic. Residues 247–267 (LGLVLAVLLICWFPALALMGH) form a helical membrane-spanning segment. Residues 268 to 279 (SLVTTLSDQVKE) are Extracellular-facing. A helical membrane pass occupies residues 280–301 (AFAFCSMLCLVNSMVNPIIYAL). Residues 302–347 (RSGEIRSAAQHCLIGWKKYLQGLGPEGKEEGPRSSVTETEADVKTT) are Cytoplasmic-facing. The disordered stretch occupies residues 326 to 347 (PEGKEEGPRSSVTETEADVKTT). Phosphoserine occurs at positions 335 and 336. At T338 the chain carries Phosphothreonine.

It belongs to the G-protein coupled receptor 1 family. As to expression, expressed by cells of hematopoietic origin. Expressed in skin in suprabasal layers and hair follicles, in brain by neurons and glial cells and by osteoblasts, osteocytes, osteoclasts (at protein level).

The protein localises to the cell membrane. Its subcellular location is the cell projection. It is found in the dendrite. It localises to the perikaryon. In terms of biological role, heterotrimeric G protein-coupled receptor for endocannabinoid 2-arachidonoylglycerol mediating inhibition of adenylate cyclase. May function in inflammatory response, nociceptive transmission and bone homeostasis. The protein is Cannabinoid receptor 2 (Cnr2) of Mus musculus (Mouse).